A 146-amino-acid polypeptide reads, in one-letter code: UPF0260 protein VP2169 (146 aa).

This sequence belongs to the UPF0260 family.

The polypeptide is UPF0260 protein VP2169 (Vibrio parahaemolyticus serotype O3:K6 (strain RIMD 2210633)).